The following is a 389-amino-acid chain: Na(+)/H(+) antiporter NhaA (389 aa).

11 helical membrane-spanning segments follow: residues Ile17–Leu37, Leu59–Val79, Ser95–Phe115, Ala124–Leu144, Val154–Phe174, Thr177–Leu197, Leu213–Ile233, Phe261–Leu281, Pro287–Phe307, Ile328–Leu348, and Leu363–Val383.

The protein belongs to the NhaA Na(+)/H(+) (TC 2.A.33) antiporter family.

The protein localises to the cell inner membrane. The catalysed reaction is Na(+)(in) + 2 H(+)(out) = Na(+)(out) + 2 H(+)(in). Na(+)/H(+) antiporter that extrudes sodium in exchange for external protons. The chain is Na(+)/H(+) antiporter NhaA from Shewanella sp. (strain MR-7).